Consider the following 1460-residue polypeptide: Ankyrin repeat-containing protein kinase A (1460 aa).

Disordered stretches follow at residues 1–32 (MSIKLPLSNINSGGNSNNSSSSNSTSNNNINI), 57–181 (IKQQ…HKSH), 216–259 (RENE…ASST), 272–311 (STSNAATNTNTNANTTSTTKTTSTVRSTSPTQFKPRVEFD), 329–354 (SSPSDFRLNPPSNVHMPTSSLSTSTS), 374–510 (FTPS…SSNP), and 551–608 (CPSA…SSIP). 3 stretches are compositionally biased toward low complexity: residues 8–32 (SNINSGGNSNNSSSSNSTSNNNINI), 61–86 (SNNNTSTSVCVSSIHSSSPISSPTSH), and 111–128 (SSGSNSSSSSSGSNNNNN). Over residues 129–140 (QIKTSNGMNKPN) the composition is skewed to polar residues. Basic and acidic residues predominate over residues 149-162 (KPRENSQNKIDDNK). Composition is skewed to low complexity over residues 220-259 (NNNNSSNNNSNNNNNNNNNNNNSNNINNVNGNKSSLASST) and 272-300 (STSNAATNTNTNANTTSTTKTTSTVRSTS). 2 stretches are compositionally biased toward polar residues: residues 329-345 (SSPSDFRLNPPSNVHMP) and 384-404 (PTNSSQVDTLQMSTESITIQP). A compositionally biased stretch (low complexity) spans 405-422 (SSLDSSSESVSDGLQSVS). Over residues 423–434 (GSPVTASPSPTI) the composition is skewed to polar residues. The segment covering 435–461 (SNNTNATTTNNNNNTNTNNNNNNNNNQ) has biased composition (low complexity). The segment covering 462-472 (HNHHHHQHSHS) has biased composition (basic residues). Positions 467–667 (HQHSHSQQHD…IFRGCGIPLD (201 aa)) are interaction with 14-3-3 protein. The span at 486 to 497 (PSSPTSPTLLPS) shows a compositional bias: low complexity. A Phorbol-ester/DAG-type zinc finger spans residues 499–551 (THDFSSEYSSNPGGKCAICRKPLWSFPISDKSRRCRDCSLVVHRACVPLATEC). The span at 559–568 (SKLSVPNGNQ) shows a compositional bias: polar residues. Low complexity predominate over residues 569–608 (SNSSSSSSSSSSSSSSSNSSSSNTKGHSRTPSSPSVSSIP). In terms of domain architecture, GRAM spans 653 to 724 (RDFHFIFRGC…SNIASIEKRS (72 aa)). ANK repeat units lie at residues 814–843 (SKEILLMSAIKNNNLDMVVTLLNYYCQVNS), 852–883 (KGYTPLHNAVFSECSDQIFMHLLNQKEVRVRE), 887–920 (DGNTPLHYFCQKFKSPECQRIVQAMIEKGANINE), 924–955 (NGETPLHKAIFNHSVRLLMVYILLKNNANVNI), and 959–988 (AGESPLHYAVRLGRLDVAKMLLAAGADPTI). A Protein kinase domain is found at 1112–1375 (LEYTEKIGSG…ATEAMTALAV (264 aa)). ATP is bound by residues 1118-1126 (IGSGASGKV) and lysine 1139. Aspartate 1231 serves as the catalytic Proton acceptor. The helical transmembrane segment at 1293–1313 (MGIVMWEIVYCVVYGCYMIPY) threads the bilayer. A coiled-coil region spans residues 1425–1460 (PEEEQIYQEAMEKQRRNQEASANRNQKNKELLNNNN). The tract at residues 1434-1460 (AMEKQRRNQEASANRNQKNKELLNNNN) is disordered.

This sequence belongs to the protein kinase superfamily. TKL Ser/Thr protein kinase family.

The protein resides in the cytoplasm. It localises to the cytoskeleton. Its subcellular location is the membrane. The protein localises to the nucleus. The catalysed reaction is L-seryl-[protein] + ATP = O-phospho-L-seryl-[protein] + ADP + H(+). It catalyses the reaction L-threonyl-[protein] + ATP = O-phospho-L-threonyl-[protein] + ADP + H(+). Functionally, involved in the development of the fruiting body. Overexpression phenocopies the spnA null phenotype. The protein is Ankyrin repeat-containing protein kinase A (arkA) of Dictyostelium discoideum (Social amoeba).